The sequence spans 241 residues: MIKLGVNIDHVATLRQARGTTYPDPIEAALIAESAGADAITLHLREDRRHIQDRDVEILRGALKTRMNLESAVTDEMIGFALRIKPHDICLVPERREELTTEGGLDVARHFEQVQRACHRLAEAGIRVSLFVDAEPAQIDASVEAGAPVIEIHTGHYADAQTTDEQQGELERVRAAVSKGLNHGLTVNAGHGLHYLNVQAIAAIPGVSELNIGHAIVARALFVGFERAVREMKNLMLEACK.

Residue asparagine 7 coordinates 3-amino-2-oxopropyl phosphate. Residue 9–10 participates in 1-deoxy-D-xylulose 5-phosphate binding; that stretch reads DH. Residue arginine 18 participates in 3-amino-2-oxopropyl phosphate binding. Catalysis depends on histidine 43, which acts as the Proton acceptor. Arginine 45 and histidine 50 together coordinate 1-deoxy-D-xylulose 5-phosphate. The active-site Proton acceptor is glutamate 70. 1-deoxy-D-xylulose 5-phosphate is bound at residue threonine 100. Histidine 191 (proton donor) is an active-site residue. Residues glycine 192 and 213–214 each bind 3-amino-2-oxopropyl phosphate; that span reads GH.

This sequence belongs to the PNP synthase family. Homooctamer; tetramer of dimers.

It is found in the cytoplasm. The catalysed reaction is 3-amino-2-oxopropyl phosphate + 1-deoxy-D-xylulose 5-phosphate = pyridoxine 5'-phosphate + phosphate + 2 H2O + H(+). It participates in cofactor biosynthesis; pyridoxine 5'-phosphate biosynthesis; pyridoxine 5'-phosphate from D-erythrose 4-phosphate: step 5/5. Its function is as follows. Catalyzes the complicated ring closure reaction between the two acyclic compounds 1-deoxy-D-xylulose-5-phosphate (DXP) and 3-amino-2-oxopropyl phosphate (1-amino-acetone-3-phosphate or AAP) to form pyridoxine 5'-phosphate (PNP) and inorganic phosphate. This chain is Pyridoxine 5'-phosphate synthase, found in Nitrosospira multiformis (strain ATCC 25196 / NCIMB 11849 / C 71).